The sequence spans 222 residues: MISWLNGLKIEIWENGTRKGVLISCSGVGYEVQLLSRSLQLLNTSKELILWVHEVHREDGSQLIGFLNKLERDLFRKLISVSGVGPQLAISLLEKNPAEQLISAITKKKIAQLTSCPGVGKKTAERLVIELQNKLSDLIGSSLKKTNNHLELEYETNVADEVRSTLLNLDYKNSEIEKAFLEFETSSKSIRSKAQESFEVSKGLDFETLLKETLIRINTESG.

A domain I region spans residues 1–67 (MISWLNGLKI…EDGSQLIGFL (67 aa)). Residues 68 to 146 (NKLERDLFRK…DLIGSSLKKT (79 aa)) form a domain II region. Positions 147 to 155 (NNHLELEYE) are flexible linker. The interval 155-222 (ETNVADEVRS…TLIRINTESG (68 aa)) is domain III.

Belongs to the RuvA family. In terms of assembly, homotetramer. Forms an RuvA(8)-RuvB(12)-Holliday junction (HJ) complex. HJ DNA is sandwiched between 2 RuvA tetramers; dsDNA enters through RuvA and exits via RuvB. An RuvB hexamer assembles on each DNA strand where it exits the tetramer. Each RuvB hexamer is contacted by two RuvA subunits (via domain III) on 2 adjacent RuvB subunits; this complex drives branch migration. In the full resolvosome a probable DNA-RuvA(4)-RuvB(12)-RuvC(2) complex forms which resolves the HJ.

Its subcellular location is the cytoplasm. In terms of biological role, the RuvA-RuvB-RuvC complex processes Holliday junction (HJ) DNA during genetic recombination and DNA repair, while the RuvA-RuvB complex plays an important role in the rescue of blocked DNA replication forks via replication fork reversal (RFR). RuvA specifically binds to HJ cruciform DNA, conferring on it an open structure. The RuvB hexamer acts as an ATP-dependent pump, pulling dsDNA into and through the RuvAB complex. HJ branch migration allows RuvC to scan DNA until it finds its consensus sequence, where it cleaves and resolves the cruciform DNA. This is Holliday junction branch migration complex subunit RuvA from Prochlorococcus marinus (strain SARG / CCMP1375 / SS120).